The following is a 334-amino-acid chain: Glycerol-1-phosphate dehydrogenase [NAD(P)+] (334 aa).

NAD(+) is bound by residues Gly-77–Asp-81 and Thr-99–Ser-102. Asp-104 contributes to the substrate binding site. Ser-108 is an NAD(+) binding site. Asp-147 contributes to the substrate binding site. Asp-147 and His-225 together coordinate Zn(2+). His-229 provides a ligand contact to substrate. His-246 is a Zn(2+) binding site.

It belongs to the glycerol-1-phosphate dehydrogenase family. Zn(2+) is required as a cofactor.

The protein resides in the cytoplasm. The catalysed reaction is sn-glycerol 1-phosphate + NAD(+) = dihydroxyacetone phosphate + NADH + H(+). It carries out the reaction sn-glycerol 1-phosphate + NADP(+) = dihydroxyacetone phosphate + NADPH + H(+). Its pathway is membrane lipid metabolism; glycerophospholipid metabolism. Its function is as follows. Catalyzes the NAD(P)H-dependent reduction of dihydroxyacetonephosphate (DHAP or glycerone phosphate) to glycerol 1-phosphate (G1P). The G1P thus generated is used as the glycerophosphate backbone of phospholipids in the cellular membranes of Archaea. This Methanococcus maripaludis (strain C5 / ATCC BAA-1333) protein is Glycerol-1-phosphate dehydrogenase [NAD(P)+].